The following is a 383-amino-acid chain: Protein delta homolog 2 (383 aa).

The first 26 residues, 1-26 (MPSGCRCLHLVCLLCILGAPVKPARG), serve as a signal peptide directing secretion. EGF-like domains lie at 27 to 58 (NDCS…LHCE), 62 to 89 (RMPG…KFCD), 91 to 129 (DEHI…RDCE), and 131 to 172 (KAGP…ARCE). Topologically, residues 27 to 306 (NDCSSLCDLA…RQEAGLGEPS (280 aa)) are extracellular. 17 cysteine pairs are disulfide-bonded: Cys-29-Cys-40, Cys-33-Cys-46, Cys-48-Cys-57, Cys-66-Cys-71, Cys-79-Cys-88, Cys-95-Cys-107, Cys-101-Cys-117, Cys-119-Cys-128, Cys-135-Cys-148, Cys-142-Cys-160, Cys-162-Cys-171, Cys-178-Cys-189, Cys-183-Cys-198, Cys-200-Cys-209, Cys-216-Cys-227, Cys-221-Cys-236, and Cys-238-Cys-247. A glycan (N-linked (GlcNAc...) asparagine) is linked at Asn-157. Positions 174-210 (NVDDCLMRPCANGATCLDGINRFSCLCPEGFTGRFCT) constitute an EGF-like 5; calcium-binding domain. In terms of domain architecture, EGF-like 6; calcium-binding spans 212 to 248 (NLDDCASRPCQRGARCRDRVHDFDCLCPSGYGGKTCE). The chain crosses the membrane as a helical span at residues 307–327 (LVAVVVFGAVTAALVLSTVLL). Residues 328-383 (TLRAWRRGFCPPGPCCYPAPHYAPARQDQECQVSMLPTGLPLPPDLPPEPGKTTAL) are Cytoplasmic-facing. The interval 364–383 (PTGLPLPPDLPPEPGKTTAL) is disordered. The span at 367-377 (LPLPPDLPPEP) shows a compositional bias: pro residues.

The protein localises to the membrane. In terms of biological role, regulates adipogenesis. This chain is Protein delta homolog 2 (DLK2), found in Bos taurus (Bovine).